The sequence spans 228 residues: Probable septum site-determining protein MinC (228 aa).

This sequence belongs to the MinC family. As to quaternary structure, interacts with MinD and FtsZ.

In terms of biological role, cell division inhibitor that blocks the formation of polar Z ring septums. Rapidly oscillates between the poles of the cell to destabilize FtsZ filaments that have formed before they mature into polar Z rings. Prevents FtsZ polymerization. In Bacillus cereus (strain G9842), this protein is Probable septum site-determining protein MinC.